Reading from the N-terminus, the 352-residue chain is C-X-C chemokine receptor type 4 (352 aa).

The important for chemokine binding and signaling stretch occupies residues 1 to 21 (MEGISIYTSDNYTEEMGSGDY). Topologically, residues 1–38 (MEGISIYTSDNYTEEMGSGDYDSIKEPCFREENAHFNR) are extracellular. The residue at position 7 (Y7) is a Sulfotyrosine. An N-linked (GlcNAc...) asparagine glycan is attached at N11. Y12 carries the post-translational modification Sulfotyrosine. Residue S18 is glycosylated (O-linked (Xyl...) (chondroitin sulfate) serine). Residue Y21 is modified to Sulfotyrosine. Disulfide bonds link C28–C274 and C109–C186. Residues 39–63 (IFLPTIYSIIFLTGIVGNGLVILVM) form a helical membrane-spanning segment. The Cytoplasmic portion of the chain corresponds to 64-77 (GYQKKLRSMTDKYR). Residues 78 to 99 (LHLSVADLLFVITLPFWAVDAV) form a helical membrane-spanning segment. The segment at 94–97 (WAVD) is chemokine binding. The Extracellular segment spans residues 100–110 (ANWYFGNFLCK). Residues 111–130 (AVHVIYTVNLYSSVLILAFI) form a helical membrane-spanning segment. The segment at 113-117 (HVIYT) is chemokine binding. Over 131–154 (SLDRYLAIVHATNSQKPRKLLAEK) the chain is Cytoplasmic. The short motif at 133-135 (DRY) is the Important for signaling element. Positions 135–147 (YLAIVHATNSQKP) are involved in dimerization; when bound to chemokine. The chain crosses the membrane as a helical span at residues 155–174 (VVYVGVWIPALLLTIPDFIF). The Extracellular portion of the chain corresponds to 175–195 (ASVSEADDRYICDRFYPNDLW). A chemokine binding, important for signaling region spans residues 186–190 (CDRFY). The interval 191–210 (PNDLWVVVFQFQHIMVGLIL) is involved in dimerization. A helical membrane pass occupies residues 196–216 (VVVFQFQHIMVGLILPGIVIL). Residues 217 to 241 (SCYCIIISKLSHSKGHQKRKALKTT) lie on the Cytoplasmic side of the membrane. A helical membrane pass occupies residues 242–261 (VILILAFFACWLPYYIGISI). The Extracellular portion of the chain corresponds to 262–282 (DSFILLEIIKQGCEFENTVHK). The involved in dimerization stretch occupies residues 266–268 (LLE). A helical membrane pass occupies residues 283–302 (WISITEALAFFHCCLNPILY). At 303–352 (AFLGAKFKTSAQHALTSVSRGSSLKILSKGKRGGHSSVSTESESSSFHSS) the chain is on the cytoplasmic side. 2 positions are modified to phosphoserine: S319 and S321. Residues S324 and S325 each carry the phosphoserine; by PKC and GRK6 modification. Residues 329 to 352 (LSKGKRGGHSSVSTESESSSFHSS) form a disordered region. The residue at position 330 (S330) is a Phosphoserine; by GRK6. K331 participates in a covalent cross-link: Glycyl lysine isopeptide (Lys-Gly) (interchain with G-Cter in ubiquitin). Low complexity predominate over residues 337–352 (HSSVSTESESSSFHSS). The residue at position 339 (S339) is a Phosphoserine; by GRK6. Phosphoserine is present on residues S348 and S351.

It belongs to the G-protein coupled receptor 1 family. In terms of assembly, monomer. Can form homodimers. Interacts with CD164. Interacts with ARRB2; the interaction is dependent on the C-terminal phosphorylation of CXCR4 and allows activation of MAPK1 and MAPK3. Interacts with ARR3; the interaction is dependent on the C-terminal phosphorylation of CXCR4 and modulates calcium mobilization. Interacts with RNF113A; the interaction, enhanced by CXCL12, promotes CXCR4 ubiquitination and subsequent degradation. Interacts (via the cytoplasmic C-terminal) with ITCH (via the WW domains I and II); the interaction, enhanced by CXCL12, promotes CXCR4 ubiquitination and leads to its degradation. Interacts with extracellular ubiquitin. Interacts with DBN1; this interaction is enhanced by antigenic stimulation. Following LPS binding, may form a complex with GDF5, HSP90AA1 and HSPA8. Post-translationally, phosphorylated on agonist stimulation. Rapidly phosphorylated on serine and threonine residues in the C-terminal. Phosphorylation at Ser-324 and Ser-325 leads to recruitment of ITCH, ubiquitination and protein degradation. Ubiquitinated after ligand binding, leading to its degradation. Ubiquitinated by ITCH at the cell membrane on agonist stimulation. The ubiquitin-dependent mechanism, endosomal sorting complex required for transport (ESCRT), then targets CXCR4 for lysosomal degradation. This process is dependent also on prior Ser-/Thr-phosphorylation in the C-terminal of CXCR4. Also binding of ARRB1 to STAM negatively regulates CXCR4 sorting to lysosomes though modulating ubiquitination of SFR5S. In terms of processing, sulfation is required for efficient binding of CXCL12/SDF-1alpha and promotes its dimerization. Post-translationally, O- and N-glycosylated. N-glycosylation can mask coreceptor function. The O-glycosylation chondroitin sulfate attachment does not affect interaction with CXCL12/SDF-1alpha nor its coreceptor activity.

It is found in the cell membrane. It localises to the cell junction. The protein resides in the early endosome. The protein localises to the late endosome. Its subcellular location is the lysosome. Its function is as follows. Receptor for the C-X-C chemokine CXCL12/SDF-1 that transduces a signal by increasing intracellular calcium ion levels and enhancing MAPK1/MAPK3 activation. Involved in the AKT signaling cascade. Plays a role in regulation of cell migration, e.g. during wound healing. Acts as a receptor for extracellular ubiquitin; leading to enhanced intracellular calcium ions and reduced cellular cAMP levels. Binds bacterial lipopolysaccharide (LPS) et mediates LPS-induced inflammatory response, including TNF secretion by monocytes. Involved in hematopoiesis and in cardiac ventricular septum formation. Also plays an essential role in vascularization of the gastrointestinal tract, probably by regulating vascular branching and/or remodeling processes in endothelial cells. Involved in cerebellar development. In the CNS, could mediate hippocampal-neuron survival. The chain is C-X-C chemokine receptor type 4 (CXCR4) from Macaca fascicularis (Crab-eating macaque).